An 82-amino-acid chain; its full sequence is Ranatensin (82 aa).

Residues 1–27 (MTTIPAIGILPIDFLTILLLFSFISHS) form the signal peptide. Positions 28–47 (VCVEFAEDAGELDKSNAFRR) are excised as a propeptide. Position 58 is a methionine amide (Met-58). A propeptide spanning residues 62-82 (SLSDDTEQATMYSSRFVESTS) is cleaved from the precursor.

The protein belongs to the bombesin/neuromedin-B/ranatensin family. In terms of tissue distribution, expressed by the skin glands.

The protein resides in the secreted. This is Ranatensin from Lithobates pipiens (Northern leopard frog).